A 386-amino-acid chain; its full sequence is 5-hydroxytryptamine receptor 1B (386 aa).

A disordered region spans residues 1–25; that stretch reads MEEPGARCAPPPPAGSQTQTPSSNL. Topologically, residues 1 to 42 are extracellular; that stretch reads MEEPGARCAPPPPAGSQTQTPSSNLSHNCSADSYIYQDSIAL. The span at 16 to 25 shows a compositional bias: polar residues; the sequence is SQTQTPSSNL. Asn-24 and Asn-28 each carry an N-linked (GlcNAc...) asparagine glycan. A helical transmembrane segment spans residues 43–68; it reads PWKVLLVALLALITLATTLSNAFVIA. The Cytoplasmic segment spans residues 69–82; the sequence is TVYRTRKLHTPANY. A helical transmembrane segment spans residues 83–107; it reads LIASLAVTDLLVSILVMPISTMYTV. The Extracellular segment spans residues 108–115; the sequence is TGRWTLGQ. The chain crosses the membrane as a helical span at residues 116 to 141; sequence VVCDFWLSSDITCCTASIMHLCVIAL. The cysteines at positions 118 and 195 are disulfide-linked. Ergotamine-binding residues include Asp-125 and Thr-130. Residues 142 to 144 carry the DRY motif; important for ligand-induced conformation changes and signaling motif; that stretch reads DRY. Over 142–161 the chain is Cytoplasmic; the sequence is DRYWAITDAVEYSAKRTPRR. The helical transmembrane segment at 162 to 180 threads the bilayer; the sequence is AAVMIALVWVFSISISLPR. The Extracellular portion of the chain corresponds to 181 to 201; sequence FFWRQAKAEEEVLDCLVNTDH. Val-197 contacts ergotamine. A helical membrane pass occupies residues 202 to 225; it reads VLYTVYSTVGAFYLPTLLLIALYG. The Cytoplasmic portion of the chain corresponds to 226–311; it reads RIYVEARSRI…AARERKATKT (86 aa). Positions 253–272 are disordered; that stretch reads ISDSPGSTSSVTSINSRVPD. A compositionally biased stretch (low complexity) spans 254 to 268; sequence SDSPGSTSSVTSINS. A helical membrane pass occupies residues 312-333; sequence LGIILGAFIVCWLPFFIISLVM. The Extracellular portion of the chain corresponds to 334–343; that stretch reads PICKDACWFH. The helical transmembrane segment at 344–366 threads the bilayer; the sequence is MAIFDFFNWLGYLNSLINPIIYT. Positions 361 to 365 match the NPxxY motif; important for ligand-induced conformation changes and signaling motif; sequence NPIIY. Topologically, residues 367 to 386 are cytoplasmic; that stretch reads MPNEDFKQAFHKLIRFKCTG. A lipid anchor (S-palmitoyl cysteine) is attached at Cys-384.

Belongs to the G-protein coupled receptor 1 family. Homodimer. Heterodimer with HTR1D. In terms of processing, phosphorylated. Desensitization of the receptor may be mediated by its phosphorylation. Palmitoylated.

It localises to the cell membrane. G-protein coupled receptor for 5-hydroxytryptamine (serotonin). Also functions as a receptor for ergot alkaloid derivatives, various anxiolytic and antidepressant drugs and other psychoactive substances, such as lysergic acid diethylamide (LSD). Ligand binding causes a conformation change that triggers signaling via guanine nucleotide-binding proteins (G proteins) and modulates the activity of downstream effectors, such as adenylate cyclase. HTR1B is coupled to G(i)/G(o) G alpha proteins and mediates inhibitory neurotransmission by inhibiting adenylate cyclase activity. Arrestin family members inhibit signaling via G proteins and mediate activation of alternative signaling pathways. Regulates the release of 5-hydroxytryptamine, dopamine and acetylcholine in the brain, and thereby affects neural activity, nociceptive processing, pain perception, mood and behavior. Besides, plays a role in vasoconstriction of cerebral arteries. The polypeptide is 5-hydroxytryptamine receptor 1B (HTR1B) (Spalax ehrenbergi (Middle East blind mole rat)).